Reading from the N-terminus, the 506-residue chain is Glucan endo-1,3-beta-glucosidase 13 (506 aa).

The N-terminal stretch at 1–22 (MARDFKLIFSISILLLLLDCCY) is a signal peptide. The N-linked (GlcNAc...) asparagine glycan is linked to N70. Residue E119 is the Proton donor of the active site. N-linked (GlcNAc...) asparagine glycosylation is found at N127, N175, and N212. Residue E264 is the Nucleophile of the active site. N-linked (GlcNAc...) asparagine glycans are attached at residues N356 and N361. C370 and C433 form a disulfide bridge. N-linked (GlcNAc...) asparagine glycans are attached at residues N459 and N465. A lipid anchor (GPI-anchor amidated serine) is attached at S471. Residues 472-506 (SASTPRGNELLQWILKLCLMISLFFSLQTMNSQAL) constitute a propeptide, removed in mature form.

This sequence belongs to the glycosyl hydrolase 17 family. Post-translationally, contains two additional disulfide bonds.

It localises to the secreted. The protein resides in the cell wall. Its subcellular location is the cell membrane. The catalysed reaction is Hydrolysis of (1-&gt;3)-beta-D-glucosidic linkages in (1-&gt;3)-beta-D-glucans.. This is Glucan endo-1,3-beta-glucosidase 13 from Arabidopsis thaliana (Mouse-ear cress).